Here is a 911-residue protein sequence, read N- to C-terminus: MGQELSQHERYVEQLKQALKTRGVKVKYADLLKFFDFVKDTCPWFPQEGTIDIKRWRRVGDCFQDYYNTFGPEKVPVTAFSYWNLIKELIDKKEVNPQVMAAVAQTEEILKSNSQTDLTKTSQNPDLDLISLDSDDEGAKSSSLQDKGLSSTKKPKRFPVLLTAQTSKDPEDPNPSEVDWDGLEDEAAKYHNPDWPPFLTRPPPYNKATPSAPTVMAVVNPKEELKEKIAQLEEQIKLEELHQALISKLQKLKTGNETVTHPDTAGGLSRTPHWPGQHIPKGKCCASREKEEQIPKDIFPVTETVDGQGQAWRHHNGFDFAVIKELKTAASQYGATAPYTLAIVESVADNWLTPTDWNTLVRAVLSGGDHLLWKSEFFENCRDTAKRNQQAGNGWDFDMLTGSGNYSSTDAQMQYDPGLFAQIQAAATKAWRKLPVKGDPGASLTGVKQGPDEPFADFVHRLITTAGRIFGSAEAGVDYVKQLAYENANPACQAAIRPYRKKTDLTGYIRLCSDIGPSYQQGLAMAAAFSGQTVKDFLNNKNKEKGGCCFKCGKKGHFAKNCHEHAHNNAEPKVPGLCPRCKRGKHWANECKSKTDNQGNPIPPHQGNRVEGPAPGPETSLWGSQLCSSQQKQPISKLTRATPGSAGLDLCSTSHTVLTPEMGPQALSTGIYGPLPPNTFGLILGRSSITMKGLQVYPGVIDNDYTGEIKIMAKAVNNIVTVSQGNRIAQLILLPLIETDNKVQQPYRGQGSFGSSDIYWVQPITCQKPSLTLWLDDKMFTGLIDTGADVTIIKLEDWPPNWPITDTLTNLRGIGQSNNPKQSSKYLTWRDKENNSGLIKPFVIPNLPVNLWGRDLLSQMKIMMCSPNDIVTAQMLAQGYSPGKGLGKKENGILHPIPNQGQSNKKGFGNF.

A propeptide spanning residues 101-161 (AAVAQTEEIL…TKKPKRFPVL (61 aa)) is cleaved from the precursor. Polar residues-rich tracts occupy residues 113-125 (NSQT…SQNP) and 140-152 (KSSS…LSST). The interval 113–178 (NSQTDLTKTS…DPEDPNPSEV (66 aa)) is disordered. The short motif at 202–205 (PPPY) is the PPXY motif element. Residues 210-213 (PSAP) carry the PTAP/PSAP motif motif. A coiled-coil region spans residues 216–257 (MAVVNPKEELKEKIAQLEEQIKLEELHQALISKLQKLKTGNE). The interval 260 to 279 (THPDTAGGLSRTPHWPGQHI) is disordered. 2 CCHC-type zinc fingers span residues 547–564 (GCCF…NCHE) and 576–593 (GLCP…ECKS). The disordered stretch occupies residues 592–626 (KSKTDNQGNPIPPHQGNRVEGPAPGPETSLWGSQL). The Peptidase A2 domain maps to 780-856 (FTGLIDTGAD…LPVNLWGRDL (77 aa)). Aspartate 785 acts as the Protease; shared with dimeric partner in catalysis. The G-patch domain occupies 867 to 911 (PNDIVTAQMLAQGYSPGKGLGKKENGILHPIPNQGQSNKKGFGNF).

As to quaternary structure, homodimer. Interacts with the reverse transcriptase/ribonuclease H. In terms of assembly, homotrimer. Released by autocatalytic processing. The protease can undergo further autoprocessing to yield 2 shorter but enzymatically active forms of 12 kDa and 13 kDa without the GDP domain. the 12 kDa form is monomeric. Post-translationally, myristoylated. Myristoylation of the matrix (MA) domain mediates the transport and binding of Gag polyproteins to the host plasma membrane and is required for the assembly of viral particles. In terms of processing, specific enzymatic cleavages in vivo yield mature proteins.

It localises to the virion. It catalyses the reaction dUTP + H2O = dUMP + diphosphate + H(+). Functionally, matrix protein. In terms of biological role, nucleocapsid protein p14: Nucleocapsid protein. Capsid protein. Its function is as follows. The aspartyl protease mediates proteolytic cleavages of Gag and Gag-Pol polyproteins during or shortly after the release of the virion from the plasma membrane. Cleavages take place as an ordered, step-wise cascade to yield mature proteins. This process is called maturation. Displays maximal activity during the budding process just prior to particle release from the cell. Functionally, enhances the activity of the reverse transcriptase. May be part of the mature RT. This is Gag-Pro polyprotein (gag-pro) from Mason-Pfizer monkey virus (MPMV).